The following is a 720-amino-acid chain: Glycine--tRNA ligase beta subunit (720 aa).

The protein belongs to the class-II aminoacyl-tRNA synthetase family. As to quaternary structure, tetramer of two alpha and two beta subunits.

It localises to the cytoplasm. It carries out the reaction tRNA(Gly) + glycine + ATP = glycyl-tRNA(Gly) + AMP + diphosphate. The polypeptide is Glycine--tRNA ligase beta subunit (Acidovorax sp. (strain JS42)).